We begin with the raw amino-acid sequence, 1023 residues long: RTX-I toxin determinant A from serotypes 1/9 (1023 aa).

A run of 3 helical transmembrane segments spans residues 226-256 (NNLP…ILSN), 297-326 (STTA…ADKF), and 367-406 (INSV…SGIL). Hemolysin-type calcium-binding repeat units follow at residues 730–747 (FGSR…DDEI), 748–765 (YGND…NDVI), 766–783 (HGGD…NDRL), 784–801 (IGGK…DDEL), 812–829 (LGGA…TNLF), and 830–847 (DGGV…KDIY).

The protein belongs to the RTX prokaryotic toxin (TC 1.C.11) family. Post-translationally, palmitoylated by ApxIC. The toxin only becomes active when modified.

It localises to the secreted. The protein resides in the host cell membrane. In terms of biological role, one of the virulence factors of A.pleuropneumoniae, which has a strong hemolytic activity and is cytotoxic for alveolar macrophages and neutrophils. The sequence is that of RTX-I toxin determinant A from serotypes 1/9 (apxIA) from Actinobacillus pleuropneumoniae (Haemophilus pleuropneumoniae).